Consider the following 741-residue polypeptide: Transketolase, chloroplastic (741 aa).

Residues 1-67 (MASSSSLTLS…TKQQFSVRAS (67 aa)) constitute a chloroplast transit peptide. His-103 provides a ligand contact to substrate. Residues His-143 and 192 to 194 (GPL) contribute to the thiamine diphosphate site. Residue Asp-233 coordinates Mg(2+). Positions 234 and 263 each coordinate thiamine diphosphate. Mg(2+) is bound by residues Asn-263 and Ile-265. Residues His-340, Arg-434, and Ser-461 each contribute to the substrate site. His-340 serves as a coordination point for thiamine diphosphate. 2 residues coordinate thiamine diphosphate: Glu-488 and Phe-515. Glu-488 acts as the Proton donor in catalysis. Positions 539, 547, and 598 each coordinate substrate.

It belongs to the transketolase family. Homodimer. Mg(2+) is required as a cofactor. The cofactor is Ca(2+). Requires Mn(2+) as cofactor. Co(2+) serves as cofactor. It depends on thiamine diphosphate as a cofactor.

It localises to the plastid. The protein resides in the chloroplast thylakoid membrane. It catalyses the reaction D-sedoheptulose 7-phosphate + D-glyceraldehyde 3-phosphate = aldehydo-D-ribose 5-phosphate + D-xylulose 5-phosphate. It functions in the pathway carbohydrate biosynthesis; Calvin cycle. In terms of biological role, catalyzes the reversible transfer of a two-carbon ketol group from fructose-6-phosphate or sedoheptulose-7-phosphate to glyceraldehyde-3-phosphate to yield xylulose-5-phosphate and erythrose-4-phosphate or ribose-5-phosphate, respectively. In Solanum tuberosum (Potato), this protein is Transketolase, chloroplastic.